The chain runs to 408 residues: MSWDQVWIDVNVATMDPSISAPYGAITNAAIAVKDGKIAWLGPRSELPAFDVLSIPVYRGKGGWITPGLIDAHTHLVFAGNRANEFELRLKGATYEEIARAGGGIISTVNACREADEAELFDLGRQRLNALAKEGVTTVEIKSGYGLDTETELKILRVARELGQHHHVDVKTTFLGAHAVPPEFKDNSDGYVDLIINKMLPAVIAENLADAVDVFCENIAFNLEQTERVLSAAKAAGLQVKLHAEQLSNMGGSELAARLGAKSVDHIEYLDEAGVKALSESGTCAVLLPGAFYFLRETQKPPIDLLRQYGVPMVLASDFNPGSSPICSTLLMLNMGCTLFRLTPEEALAGLTLNAAKALGIEENVGSLVVGKQADFCLWDIATPAQLAYSYGVNPCKDVVKNGKLVHQ.

His-73 and His-75 together coordinate Fe(3+). Residues His-73 and His-75 each contribute to the Zn(2+) site. 3 residues coordinate 4-imidazolone-5-propanoate: Arg-82, Tyr-145, and His-178. Residue Tyr-145 participates in N-formimidoyl-L-glutamate binding. His-243 is a binding site for Fe(3+). His-243 is a binding site for Zn(2+). Gln-246 serves as a coordination point for 4-imidazolone-5-propanoate. Asp-318 contributes to the Fe(3+) binding site. Residue Asp-318 coordinates Zn(2+). Asn-320 and Gly-322 together coordinate N-formimidoyl-L-glutamate. Ser-323 provides a ligand contact to 4-imidazolone-5-propanoate.

This sequence belongs to the metallo-dependent hydrolases superfamily. HutI family. The cofactor is Zn(2+). Requires Fe(3+) as cofactor.

It localises to the cytoplasm. It carries out the reaction 4-imidazolone-5-propanoate + H2O = N-formimidoyl-L-glutamate. Its pathway is amino-acid degradation; L-histidine degradation into L-glutamate; N-formimidoyl-L-glutamate from L-histidine: step 3/3. In terms of biological role, catalyzes the hydrolytic cleavage of the carbon-nitrogen bond in imidazolone-5-propanoate to yield N-formimidoyl-L-glutamate. It is the third step in the universal histidine degradation pathway. This chain is Imidazolonepropionase, found in Shewanella sp. (strain MR-4).